We begin with the raw amino-acid sequence, 63 residues long: Short neurotoxin 2 (63 aa).

4 disulfides stabilise this stretch: Cys-3/Cys-21, Cys-15/Cys-39, Cys-43/Cys-49, and Cys-50/Cys-55.

This sequence belongs to the three-finger toxin family. Short-chain subfamily. Orphan group XVIII sub-subfamily. As to expression, expressed by the venom gland.

The protein resides in the secreted. In terms of biological role, blocks both the muscle-twitch response to nerve stimulation and the response to exogenous acetylcholine. This is Short neurotoxin 2 from Bungarus fasciatus (Banded krait).